The sequence spans 1790 residues: Vitellogenin (1790 aa).

Positions 1–19 are cleaved as a signal peptide; the sequence is MWSTVALCLLVGLSYVSSS. Positions 23–799 constitute a Vitellogenin domain; sequence WKDNTEYVYS…SAESSFPKIM (777 aa). N-linked (GlcNAc...) asparagine glycans are attached at residues N219 and N297. Residues 342–353 show a composition bias toward acidic residues; sequence LMEDSSSEESSE. The interval 342 to 400 is disordered; the sequence is LMEDSSSEESSEQEMTHRRFRRSANSLTKQWRESSEEWNQQQQQPRPQLTRAPHSPLLP. Low complexity predominate over residues 378–389; that stretch reads EWNQQQQQPRPQ. N-linked (GlcNAc...) asparagine glycosylation is found at N554, N573, N893, N1345, N1416, N1430, N1480, N1699, and N1735. Residues 1466 to 1675 form the VWFD domain; that stretch reads PTCVIDQTTA…SYQVEKGQQW (210 aa). The cysteines at positions 1468 and 1638 are disulfide-linked.

It localises to the secreted. In terms of biological role, precursor of the egg-yolk proteins that are sources of nutrients during embryonic development. The sequence is that of Vitellogenin (VTG) from Anthonomus grandis (Mexican cotton boll weevil).